A 236-amino-acid chain; its full sequence is Lectin alpha chain (236 aa).

Glu-8 and Asp-10 together coordinate Mn(2+). Ca(2+) contacts are provided by Asp-10, Tyr-12, Asn-14, and Asp-19. A carbohydrate is bound at residue Tyr-12. Mn(2+) is bound by residues Asp-19, His-24, and Ser-34. 99-100 (LY) is an a carbohydrate binding site. Asp-207 contacts Ca(2+). Arg-227 contacts a carbohydrate.

Belongs to the leguminous lectin family. As to quaternary structure, equilibrium between homodimer and homotetramer. Oligomerization is pH-dependent with homotetramers forming at pH 6.5 and above. In terms of processing, the beta and gamma chains are produced by partial proteolytic processing of the lectin alpha chain by an asparaginyl endopeptidase. Mixture of 60% alpha lectin and 40% of its beta and gamma proteolytic fragments. As to expression, seed.

Its function is as follows. D-mannose/D-glucose-binding lectin. Has anti-inflammatory activity in rats. Induces histamine release in mast cells from rat. Induces lymphocyte proliferation and IFNG production. The sequence is that of Lectin alpha chain from Cratylia argentea (Cratylia floribunda).